The following is a 137-amino-acid chain: Small ribosomal subunit protein uS9 (137 aa).

Over residues 106-117 the composition is skewed to basic and acidic residues; that stretch reads KTEGYLTRDPRA. Positions 106-137 are disordered; it reads KTEGYLTRDPRAKERRKYGLRKARKAPQYSKR. Basic residues predominate over residues 118-137; it reads KERRKYGLRKARKAPQYSKR.

The protein belongs to the universal ribosomal protein uS9 family.

The sequence is that of Small ribosomal subunit protein uS9 from Thermosynechococcus vestitus (strain NIES-2133 / IAM M-273 / BP-1).